A 1755-amino-acid polypeptide reads, in one-letter code: Transposon Ty1-JR1 Gag-Pol polyprotein (1755 aa).

Residues 1–16 (MESQQLSQHSHISHGS) show a composition bias toward low complexity. Disordered stretches follow at residues 1 to 93 (MESQ…MMTQ), 126 to 173 (PQSQ…RPPP), and 352 to 421 (GSRN…SKST). Composition is skewed to polar residues over residues 48 to 60 (TKAN…TPAS) and 127 to 152 (QSQF…GNTF). The segment covering 153–165 (TDSSSADSDMTST) has biased composition (low complexity). The tract at residues 299 to 401 (NNGIHINNKV…NSKSKTARAH (103 aa)) is RNA-binding. The span at 402–418 (NVSTSNNSPSTDNDSIS) shows a compositional bias: low complexity. Position 416 is a phosphoserine (Ser-416). Catalysis depends on Asp-461, which acts as the For protease activity; shared with dimeric partner. The segment at 583–640 (NVHTSESTRKYPYPFIHRMLAHANAQTIRYSLKNNTITYFNESDVDWSSAIDYQCPDC) is integrase-type zinc finger-like. The Integrase catalytic domain maps to 660-835 (NSYEPFQYLH…AGLDISTLLP (176 aa)). Mg(2+) contacts are provided by Asp-671 and Asp-736. 3 disordered regions span residues 956–1087 (SKAV…ETEK), 1092–1111 (RSPS…NIVP), and 1130–1186 (DLPL…EDNE). Residues 960–969 (SPTDSTPPST) are compositionally biased toward low complexity. Over residues 1005 to 1015 (STPQISNIEST) the composition is skewed to polar residues. Positions 1038-1053 (ESSHASKSKDFRHSDS) are enriched in basic and acidic residues. 2 stretches are compositionally biased toward polar residues: residues 1054 to 1082 (YSEN…QISD) and 1101 to 1111 (PENNSSHNIVP). Residues 1178 to 1212 (KKRSLEDNETEIKVSRDTWNTKNMRSLEPPRSKKR) carry the Bipartite nuclear localization signal motif. Positions 1338–1476 (NNYYITQLDI…DILGLEIKYQ (139 aa)) constitute a Reverse transcriptase Ty1/copia-type domain. Mg(2+) is bound by residues Asp-1346, Asp-1427, Asp-1428, Asp-1610, Glu-1652, and Asp-1685. Positions 1610-1752 (DASYGNQPYY…IKTFKLLTNK (143 aa)) constitute an RNase H Ty1/copia-type domain.

In terms of assembly, the capsid protein forms a homotrimer, from which the VLPs are assembled. The protease is a homodimer, whose active site consists of two apposed aspartic acid residues. Post-translationally, initially, virus-like particles (VLPs) are composed of the structural unprocessed proteins Gag and Gag-Pol, and also contain the host initiator methionine tRNA (tRNA(i)-Met) which serves as a primer for minus-strand DNA synthesis, and a dimer of genomic Ty RNA. Processing of the polyproteins occurs within the particle and proceeds by an ordered pathway, called maturation. First, the protease (PR) is released by autocatalytic cleavage of the Gag-Pol polyprotein yielding capsid protein p45 and a Pol-p154 precursor protein. This cleavage is a prerequisite for subsequent processing of Pol-p154 at the remaining sites to release the mature structural and catalytic proteins. Maturation takes place prior to the RT reaction and is required to produce transposition-competent VLPs.

It is found in the cytoplasm. It localises to the nucleus. The enzyme catalyses DNA(n) + a 2'-deoxyribonucleoside 5'-triphosphate = DNA(n+1) + diphosphate. The catalysed reaction is Endonucleolytic cleavage to 5'-phosphomonoester.. Its function is as follows. Capsid protein (CA) is the structural component of the virus-like particle (VLP), forming the shell that encapsulates the retrotransposons dimeric RNA genome. The particles are assembled from trimer-clustered units and there are holes in the capsid shells that allow for the diffusion of macromolecules. CA also has nucleocapsid-like chaperone activity, promoting primer tRNA(i)-Met annealing to the multipartite primer-binding site (PBS), dimerization of Ty1 RNA and initiation of reverse transcription. In terms of biological role, the aspartyl protease (PR) mediates the proteolytic cleavages of the Gag and Gag-Pol polyproteins after assembly of the VLP. Functionally, reverse transcriptase/ribonuclease H (RT) is a multifunctional enzyme that catalyzes the conversion of the retro-elements RNA genome into dsDNA within the VLP. The enzyme displays a DNA polymerase activity that can copy either DNA or RNA templates, and a ribonuclease H (RNase H) activity that cleaves the RNA strand of RNA-DNA heteroduplexes during plus-strand synthesis and hydrolyzes RNA primers. The conversion leads to a linear dsDNA copy of the retrotransposon that includes long terminal repeats (LTRs) at both ends. Integrase (IN) targets the VLP to the nucleus, where a subparticle preintegration complex (PIC) containing at least integrase and the newly synthesized dsDNA copy of the retrotransposon must transit the nuclear membrane. Once in the nucleus, integrase performs the integration of the dsDNA into the host genome. In Saccharomyces cerevisiae (strain ATCC 204508 / S288c) (Baker's yeast), this protein is Transposon Ty1-JR1 Gag-Pol polyprotein (TY1B-JR1).